We begin with the raw amino-acid sequence, 680 residues long: Lipase 1 (680 aa).

An N-terminal signal peptide occupies residues 1–34 (MKSQNKYSIRKFSVGASSILIATLLFLSGGQAQA). Positions 35–290 (AEKQVNMGNS…AKAKGDQTNK (256 aa)) are excised as a propeptide. Disordered regions lie at residues 39–58 (VNMGNSQEDTVTAQSIGDQQ) and 82–260 (KNLH…KNGL). Over residues 40 to 58 (NMGNSQEDTVTAQSIGDQQ) the composition is skewed to polar residues. Basic and acidic residues predominate over residues 84–112 (LHNDKTISEENHRKTDDLNKDQLKDDKKS). 2 stretches are compositionally biased toward polar residues: residues 162-193 (SQDLNANNNLPSQSRTKVSPSLNKSDQTSQRE) and 204-223 (QPQQKNQANDKITDHNFNNE). Over residues 224–234 (QEVKPQKDEKT) the composition is skewed to basic and acidic residues. The span at 235-246 (LSVSDLKNNQKS) shows a compositional bias: polar residues. The active-site Nucleophile is Ser-408. Asp-600 (charge relay system) is an active-site residue. A Ca(2+)-binding site is contributed by Asp-638. His-639 serves as the catalytic Charge relay system. Ca(2+)-binding residues include Asp-641, Asp-646, and Asp-649.

It belongs to the AB hydrolase superfamily. Lipase family.

It localises to the secreted. The catalysed reaction is a triacylglycerol + H2O = a diacylglycerol + a fatty acid + H(+). The protein is Lipase 1 (lip1) of Staphylococcus aureus (strain MRSA252).